We begin with the raw amino-acid sequence, 534 residues long: Nucleolar protein 58 (534 aa).

Position 34 is a phosphothreonine (threonine 34). Serine 109 carries the phosphoserine modification. Residue lysine 157 forms a Glycyl lysine isopeptide (Lys-Gly) (interchain with G-Cter in SUMO2) linkage. Positions 282–400 (IAPNVTVMVG…LEARLRILED (119 aa)) constitute a Nop domain. 2 positions are modified to phosphoserine: serine 304 and serine 351. Glycyl lysine isopeptide (Lys-Gly) (interchain with G-Cter in SUMO2) cross-links involve residues lysine 353, lysine 411, lysine 415, lysine 422, lysine 426, lysine 441, lysine 444, and lysine 465. A Glycyl lysine isopeptide (Lys-Gly) (interchain with G-Cter in SUMO); alternate cross-link involves residue lysine 467. Lysine 467 participates in a covalent cross-link: Glycyl lysine isopeptide (Lys-Gly) (interchain with G-Cter in SUMO1); alternate. Lysine 467 participates in a covalent cross-link: Glycyl lysine isopeptide (Lys-Gly) (interchain with G-Cter in SUMO2); alternate. Residues 470-486 (VEEEMEEAEEEQVVEEE) are compositionally biased toward acidic residues. Residues 470 to 534 (VEEEMEEAEE…KKKKKKDAED (65 aa)) are disordered. Lysine 490 participates in a covalent cross-link: Glycyl lysine isopeptide (Lys-Gly) (interchain with G-Cter in SUMO2). Positions 490–500 (KKKKKKDKKKH) are enriched in basic residues. Residue lysine 502 forms a Glycyl lysine isopeptide (Lys-Gly) (interchain with G-Cter in SUMO); alternate linkage. Lysine 502 is covalently cross-linked (Glycyl lysine isopeptide (Lys-Gly) (interchain with G-Cter in SUMO2); alternate). Residues serine 507 and serine 519 each carry the phosphoserine modification. Over residues 522 to 534 (KKKKKKKKKDAED) the composition is skewed to basic residues.

This sequence belongs to the NOP5/NOP56 family. As to quaternary structure, core component of box C/D small nucleolar ribonucleoprotein (snoRNP) particles; the core proteins SNU13, NOP56, NOP58 and FBL or FBLL1 assemble stepwise onto the snoRNA. Interacts with NOLC1/Nopp140. Interacts with NOPCHAP1, NUFIP1, RUVBL1 and RUVBL2; NOPCHAP1 bridges the association of NOP58 with RUVBL1:RUVBL2 and NUFIP1. Interacts with PIH1D1. Part of the small subunit (SSU) processome, composed of more than 70 proteins and the RNA chaperone small nucleolar RNA (snoRNA) U3. Post-translationally, sumoylation is essential for high-affinity binding to snoRNAs.

It is found in the nucleus. The protein resides in the nucleolus. It localises to the nucleoplasm. Required for the biogenesis of box C/D snoRNAs such as U3, U8 and U14 snoRNAs. Part of the small subunit (SSU) processome, first precursor of the small eukaryotic ribosomal subunit. During the assembly of the SSU processome in the nucleolus, many ribosome biogenesis factors, an RNA chaperone and ribosomal proteins associate with the nascent pre-rRNA and work in concert to generate RNA folding, modifications, rearrangements and cleavage as well as targeted degradation of pre-ribosomal RNA by the RNA exosome. Core component of box C/D small nucleolar ribonucleoprotein (snoRNP) complexes that function in methylation of multiple sites on ribosomal RNAs (rRNAs) and messenger RNAs (mRNAs). The protein is Nucleolar protein 58 (Nop58) of Rattus norvegicus (Rat).